We begin with the raw amino-acid sequence, 120 residues long: UPF0231 protein NT01EI_0766 (120 aa).

It belongs to the UPF0231 family.

In Edwardsiella ictaluri (strain 93-146), this protein is UPF0231 protein NT01EI_0766.